The primary structure comprises 169 residues: Endoribonuclease YbeY (169 aa).

3 residues coordinate Zn(2+): His-128, His-132, and His-138.

The protein belongs to the endoribonuclease YbeY family. Zn(2+) is required as a cofactor.

It localises to the cytoplasm. Its function is as follows. Single strand-specific metallo-endoribonuclease involved in late-stage 70S ribosome quality control and in maturation of the 3' terminus of the 16S rRNA. This is Endoribonuclease YbeY from Rhizorhabdus wittichii (strain DSM 6014 / CCUG 31198 / JCM 15750 / NBRC 105917 / EY 4224 / RW1) (Sphingomonas wittichii).